Reading from the N-terminus, the 354-residue chain is Guanine nucleotide-binding protein G(o) subunit alpha (354 aa).

G2 carries N-myristoyl glycine lipidation. A lipid anchor (S-palmitoyl cysteine) is attached at C3. The 323-residue stretch at 32-354 (KDIKLLLLGA…ANNLRGCGLY (323 aa)) folds into the G-alpha domain. The interval 35–48 (KLLLLGAGESGKST) is G1 motif. GTP contacts are provided by residues 40–47 (GAGESGKS), 176–182 (LRTRVKT), 201–205 (DVGGQ), 270–273 (NKKD), and A326. Residues S47 and T182 each coordinate Mg(2+). A G2 motif region spans residues 174 to 182 (DILRTRVKT). Positions 197–206 (FKLFDVGGQR) are G3 motif. Residues 266–273 (ILFLNKKD) are G4 motif. A G5 motif region spans residues 324–329 (TCATDT).

This sequence belongs to the G-alpha family. G(i/o/t/z) subfamily. As to quaternary structure, g proteins are composed of 3 units; alpha, beta and gamma. The alpha chain contains the guanine nucleotide binding site.

Functionally, guanine nucleotide-binding proteins (G proteins) are involved as modulators or transducers in various transmembrane signaling systems. The G(o) protein function is not clear. This chain is Guanine nucleotide-binding protein G(o) subunit alpha, found in Locusta migratoria (Migratory locust).